Reading from the N-terminus, the 403-residue chain is tRNA methyltransferase 10 homolog C (403 aa).

A mitochondrion-targeting transit peptide spans 1 to 39 (MAAFLKMSVSVNFFRPFTRFLVPFTLHRKRNNLTILQRY). Serine 84 is modified (phosphoserine). The stretch at 138 to 169 (TKEKVKKARQIKKEMKAAAREEAKNIKLLETT) forms a coiled coil. One can recognise an SAM-dependent MTase TRM10-type domain in the interval 191 to 383 (MGWKGAQAMQ…QFVPKRKHTG (193 aa)).

The protein belongs to the class IV-like SAM-binding methyltransferase superfamily. TRM10 family. Component of mitochondrial ribonuclease P, a complex composed of TRMT10C/MRPP1, HSD17B10/MRPP2 and PRORP/MRPP3. Interacts with HSD17B10/MRPP2; forming the MRPP1-MRPP2 subcomplex of the mitochondrial ribonuclease P complex. Interacts with GRSF1.

It localises to the mitochondrion matrix. Its subcellular location is the mitochondrion nucleoid. It catalyses the reaction adenosine(9) in tRNA + S-adenosyl-L-methionine = N(1)-methyladenosine(9) in tRNA + S-adenosyl-L-homocysteine + H(+). It carries out the reaction guanosine(9) in tRNA + S-adenosyl-L-methionine = N(1)-methylguanosine(9) in tRNA + S-adenosyl-L-homocysteine + H(+). The catalysed reaction is an adenosine in mRNA + S-adenosyl-L-methionine = an N(1)-methyladenosine in mRNA + S-adenosyl-L-homocysteine + H(+). In terms of biological role, mitochondrial tRNA N(1)-methyltransferase involved in mitochondrial tRNA maturation. Component of mitochondrial ribonuclease P, a complex composed of TRMT10C/MRPP1, HSD17B10/MRPP2 and PRORP/MRPP3, which cleaves tRNA molecules in their 5'-ends. Together with HSD17B10/MRPP2, forms a subcomplex of the mitochondrial ribonuclease P, named MRPP1-MRPP2 subcomplex, which displays functions that are independent of the ribonuclease P activity. The MRPP1-MRPP2 subcomplex catalyzes the formation of N(1)-methylguanine and N(1)-methyladenine at position 9 (m1G9 and m1A9, respectively) in tRNAs; TRMT10C/MRPP1 acting as the catalytic N(1)-methyltransferase subunit. The MRPP1-MRPP2 subcomplex also acts as a tRNA maturation platform: following 5'-end cleavage by the mitochondrial ribonuclease P complex, the MRPP1-MRPP2 subcomplex enhances the efficiency of 3'-processing catalyzed by ELAC2, retains the tRNA product after ELAC2 processing and presents the nascent tRNA to the mitochondrial CCA tRNA nucleotidyltransferase TRNT1 enzyme. In addition to tRNA N(1)-methyltransferase activity, TRMT10C/MRPP1 also acts as a mRNA N(1)-methyltransferase by mediating methylation of adenosine residues at the N(1) position of MT-ND5 mRNA. Associates with mitochondrial DNA complexes at the nucleoids to initiate RNA processing and ribosome assembly. This Homo sapiens (Human) protein is tRNA methyltransferase 10 homolog C.